We begin with the raw amino-acid sequence, 103 residues long: Large ribosomal subunit protein bL21 (103 aa).

It belongs to the bacterial ribosomal protein bL21 family. As to quaternary structure, part of the 50S ribosomal subunit. Contacts protein L20.

Functionally, this protein binds to 23S rRNA in the presence of protein L20. The polypeptide is Large ribosomal subunit protein bL21 (Histophilus somni (strain 129Pt) (Haemophilus somnus)).